A 1323-amino-acid chain; its full sequence is Regulatory protein ADR1 (1323 aa).

Ser54 carries the phosphoserine modification. C2H2-type zinc fingers lie at residues 104-126 (FVCE…YRSH) and 132-155 (YPCG…QKIH). The tract at residues 175-216 (KARKNSASSVKFQTPTYGTPDNGNFLNRTTANTRRKASPEAN) is disordered. A compositionally biased stretch (polar residues) spans 179 to 206 (NSASSVKFQTPTYGTPDNGNFLNRTTAN). Phosphothreonine occurs at positions 188 and 193. Ser230 is modified (phosphoserine; by PKA; in vitro). Phosphoserine is present on Ser258. Thr259 bears the Phosphothreonine mark. Ser299, Ser323, and Ser325 each carry phosphoserine. Thr327 carries the phosphothreonine modification.

Post-translationally, phosphorylation at Ser-230 by cAMP-dependent protein kinase A does not affect DNA binding but appears to prevent transcription of ADH2 during glucose repression.

It localises to the nucleus. In terms of biological role, required for transcriptional activation of glucose-repressible alcohol dehydrogenase (ADH2). This is Regulatory protein ADR1 (ADR1) from Saccharomyces cerevisiae (strain ATCC 204508 / S288c) (Baker's yeast).